Reading from the N-terminus, the 316-residue chain is Type II restriction enzyme BsuBI (316 aa).

It belongs to the BsuBI/PstI type II restriction endonuclease family. As to quaternary structure, homodimer. It depends on Mg(2+) as a cofactor.

The catalysed reaction is Endonucleolytic cleavage of DNA to give specific double-stranded fragments with terminal 5'-phosphates.. Functionally, a P subtype restriction enzyme that recognizes the double-stranded sequence 5'-CTGCAG-3' and cleaves after A-5. The chain is Type II restriction enzyme BsuBI (hsdBR) from Bacillus subtilis.